Consider the following 68-residue polypeptide: Protein transport protein Sec61 gamma-1 subunit (68 aa).

At 1–32 the chain is on the cytoplasmic side; sequence MDKVVKFAEPGRAFAKDSIRLVKRCTKPDRKE. Residues 33–61 form a helical membrane-spanning segment; the sequence is FQKIAIATAVGFAIMGFIGFFVKLIHIPI. Topologically, residues 62-68 are extracellular; the sequence is NNIIVGS.

This sequence belongs to the SecE/SEC61-gamma family. In terms of assembly, heterotrimeric complex composed of SEC61-alpha, SEC61-beta and SEC61-gamma.

It is found in the endoplasmic reticulum membrane. Its function is as follows. Necessary for protein translocation in the endoplasmic reticulum. The chain is Protein transport protein Sec61 gamma-1 subunit (SEC61G1) from Drosophila melanogaster (Fruit fly).